A 91-amino-acid polypeptide reads, in one-letter code: Small ribosomal subunit protein uS15 (91 aa).

The protein belongs to the universal ribosomal protein uS15 family. In terms of assembly, part of the 30S ribosomal subunit. Forms a bridge to the 50S subunit in the 70S ribosome, contacting the 23S rRNA.

Functionally, one of the primary rRNA binding proteins, it binds directly to 16S rRNA where it helps nucleate assembly of the platform of the 30S subunit by binding and bridging several RNA helices of the 16S rRNA. Forms an intersubunit bridge (bridge B4) with the 23S rRNA of the 50S subunit in the ribosome. The sequence is that of Small ribosomal subunit protein uS15 from Sulfurimonas denitrificans (strain ATCC 33889 / DSM 1251) (Thiomicrospira denitrificans (strain ATCC 33889 / DSM 1251)).